A 369-amino-acid chain; its full sequence is Ubiquinone biosynthesis protein COQ4, mitochondrial (369 aa).

The transit peptide at 1–28 (MTSILGSARPLIQVGPKSRNASTSMSRL) directs the protein to the mitochondrion. The disordered stretch occupies residues 1–70 (MTSILGSARP…NPTNASRHPR (70 aa)). Polar residues-rich tracts occupy residues 19-33 (RNAS…SFPT) and 47-66 (YATI…TNAS). Zn(2+) is bound by residues His-198, Asp-199, His-202, and Glu-214. Positions 330 to 369 (FSGRAKKGGKRRGWPSKILEHQKAQHQQQQQQQKVDESRN) are disordered. Basic residues predominate over residues 332-343 (GRAKKGGKRRGW).

This sequence belongs to the COQ4 family. In terms of assembly, component of a multi-subunit COQ enzyme complex, composed of at least COQ3, COQ4, COQ5, COQ6, COQ7 and COQ9. It depends on Zn(2+) as a cofactor.

It localises to the mitochondrion inner membrane. It catalyses the reaction a 4-hydroxy-3-methoxy-5-(all-trans-polyprenyl)benzoate + H(+) = a 2-methoxy-6-(all-trans-polyprenyl)phenol + CO2. It functions in the pathway cofactor biosynthesis; ubiquinone biosynthesis. Its function is as follows. Lyase that catalyzes the C1-decarboxylation of 4-hydroxy-3-methoxy-5-(all-trans-polyprenyl)benzoic acid into 2-methoxy-6-(all-trans-polyprenyl)phenol during ubiquinone biosynthesis. The sequence is that of Ubiquinone biosynthesis protein COQ4, mitochondrial from Mycosarcoma maydis (Corn smut fungus).